Reading from the N-terminus, the 425-residue chain is Serine--tRNA ligase (425 aa).

230–232 (TAE) contributes to the L-serine binding site. 261 to 263 (RAE) provides a ligand contact to ATP. L-serine is bound at residue Glu284. 348–351 (EISS) is a binding site for ATP. Position 384 (Ser384) interacts with L-serine.

Belongs to the class-II aminoacyl-tRNA synthetase family. Type-1 seryl-tRNA synthetase subfamily. As to quaternary structure, homodimer. The tRNA molecule binds across the dimer.

The protein resides in the cytoplasm. It carries out the reaction tRNA(Ser) + L-serine + ATP = L-seryl-tRNA(Ser) + AMP + diphosphate + H(+). It catalyses the reaction tRNA(Sec) + L-serine + ATP = L-seryl-tRNA(Sec) + AMP + diphosphate + H(+). Its pathway is aminoacyl-tRNA biosynthesis; selenocysteinyl-tRNA(Sec) biosynthesis; L-seryl-tRNA(Sec) from L-serine and tRNA(Sec): step 1/1. In terms of biological role, catalyzes the attachment of serine to tRNA(Ser). Is also able to aminoacylate tRNA(Sec) with serine, to form the misacylated tRNA L-seryl-tRNA(Sec), which will be further converted into selenocysteinyl-tRNA(Sec). This chain is Serine--tRNA ligase, found in Zymomonas mobilis subsp. mobilis (strain ATCC 31821 / ZM4 / CP4).